A 429-amino-acid chain; its full sequence is Methanol:N,N-dimethyl-4-nitrosoaniline oxidoreductase (429 aa).

The protein belongs to the iron-containing alcohol dehydrogenase family. Homodecamer. Mg(2+) serves as cofactor. It depends on Zn(2+) as a cofactor. The cofactor is NADPH.

It catalyses the reaction methanol + A = formaldehyde + AH2. With respect to regulation, inhibited by azide and hydrazine. Catalyzes the oxidation of methanol to yield formaldehyde. While the in vivo electron acceptor is not known, N,N-dimethyl-4-nitrosoaniline (NDMA) can serve this function in vitro and is reduced to 4-(hydroxylamino)-N,N-dimethylaniline. It can also use various other primary alcohols, polyols and formaldehyde. In addition, MNO is able to produce methylformate from methanol plus formaldehyde, and possesses a formaldehyde dismutase and a NADH-dependent formaldehyde reductase activity. The chain is Methanol:N,N-dimethyl-4-nitrosoaniline oxidoreductase (mno) from Amycolatopsis methanolica.